A 180-amino-acid polypeptide reads, in one-letter code: Orotate phosphoribosyltransferase (180 aa).

Residues Arg95, Lys96, Lys99, and 121-129 (EDVTTTGGS) contribute to the 5-phospho-alpha-D-ribose 1-diphosphate site. Thr125 and Arg153 together coordinate orotate.

This sequence belongs to the purine/pyrimidine phosphoribosyltransferase family. PyrE subfamily. As to quaternary structure, homodimer. It depends on Mg(2+) as a cofactor.

The enzyme catalyses orotidine 5'-phosphate + diphosphate = orotate + 5-phospho-alpha-D-ribose 1-diphosphate. It participates in pyrimidine metabolism; UMP biosynthesis via de novo pathway; UMP from orotate: step 1/2. Functionally, catalyzes the transfer of a ribosyl phosphate group from 5-phosphoribose 1-diphosphate to orotate, leading to the formation of orotidine monophosphate (OMP). This is Orotate phosphoribosyltransferase from Methanothermobacter thermautotrophicus (strain ATCC 29096 / DSM 1053 / JCM 10044 / NBRC 100330 / Delta H) (Methanobacterium thermoautotrophicum).